A 304-amino-acid chain; its full sequence is Insulin-like growth factor-binding protein 2 (304 aa).

The N-terminal stretch at 1–34 is a signal peptide; that stretch reads MLPRLGGPALPLLLPSLLLLLLLGAGGCGPGVRA. Positions 36–118 constitute an IGFBP N-terminal domain; that stretch reads VLFRCPPCTP…VTGAGTCEKR (83 aa). Cystine bridges form between Cys40–Cys68, Cys43–Cys70, Cys51–Cys71, Cys59–Cys74, Cys82–Cys95, Cys89–Cys115, Cys206–Cys240, Cys251–Cys262, and Cys264–Cys285. One can recognise a Thyroglobulin type-1 domain in the interval 203–285; sequence RTPCQQELDQ…APTIRGDPEC (83 aa). Positions 280–282 match the Cell attachment site motif; that stretch reads RGD.

Interacts with IGF1. Interacts with IGF2. Interacts (via RGD motif) with integrin alpha5/ITGA5; this interaction induces cell migration, adhesion or apoptosis according to the context. Interacts with PTPRB; this interaction leads to PTPRB dimerization and inactivation. In terms of processing, cleaved by MMP9 leading to release of free IGF2 from IGFBP2-IGF2 complex, which contributes to enhance the motility and the growth of astrocytes. Post-translationally, O-glycosylated. In terms of tissue distribution, in adults, expressed in brain, testes, ovaries, and kidney. Expression in the adult liver is barely detectable.

It localises to the secreted. Its function is as follows. Multifunctional protein that plays a critical role in regulating the availability of IGFs such as IGF1 and IGF2 to their receptors and thereby regulates IGF-mediated cellular processes including proliferation, differentiation, and apoptosis in a cell-type specific manner. Functions coordinately with receptor protein tyrosine phosphatase beta/PTPRB and the IGF1 receptor to regulate IGF1-mediated signaling by stimulating the phosphorylation of PTEN leading to its inactivation and AKT1 activation. Plays a positive role in cell migration via interaction with integrin alpha5/ITGA5 through an RGD motif. Additionally, interaction with ITGA5/ITGB1 enhances the adhesion of endothelial progenitor cells to endothelial cells. Upon mitochondrial damage, facilitates apoptosis with ITGA5 of podocytes, and then activates the phosphorylation of focal adhesion kinase (FAK)-mediated mitochondrial injury. The sequence is that of Insulin-like growth factor-binding protein 2 (Igfbp2) from Rattus norvegicus (Rat).